The primary structure comprises 461 residues: A-type ATP synthase subunit B (461 aa).

The protein belongs to the ATPase alpha/beta chains family. As to quaternary structure, has multiple subunits with at least A(3), B(3), C, D, E, F, H, I and proteolipid K(x).

The protein resides in the cell membrane. In terms of biological role, component of the A-type ATP synthase that produces ATP from ADP in the presence of a proton gradient across the membrane. The B chain is a regulatory subunit. The sequence is that of A-type ATP synthase subunit B from Nitrosopumilus maritimus (strain SCM1).